The sequence spans 620 residues: Chaperone protein HscA homolog (620 aa).

This sequence belongs to the heat shock protein 70 family.

In terms of biological role, chaperone involved in the maturation of iron-sulfur cluster-containing proteins. Has a low intrinsic ATPase activity which is markedly stimulated by HscB. This is Chaperone protein HscA homolog from Pseudomonas syringae pv. tomato (strain ATCC BAA-871 / DC3000).